The following is a 224-amino-acid chain: MKGLIGKKIGMTQVFNDEGNLVPVTVIDVGTCQVVGKRTPEKDNYSAVTIGFGEIREKILNLAERGFFKKANAPYRRHLKEFRVTPEEAASFNVGDAVKADMFAKGELVDVTGITKGRGFSGVMRRWNFKGSQTKTHGTHEYQRHPGAIGQRKTPGRVYPNKKMPGHYGVDQVTTQNLTVVDVDVEKGLVLVKGAVAGHNNGVVYIRPSIKAAMRAQHKAARGA.

The disordered stretch occupies residues 132–153; it reads SQTKTHGTHEYQRHPGAIGQRK.

It belongs to the universal ribosomal protein uL3 family. In terms of assembly, part of the 50S ribosomal subunit. Forms a cluster with proteins L14 and L19.

One of the primary rRNA binding proteins, it binds directly near the 3'-end of the 23S rRNA, where it nucleates assembly of the 50S subunit. The protein is Large ribosomal subunit protein uL3 of Myxococcus xanthus (strain DK1622).